We begin with the raw amino-acid sequence, 88 residues long: uncharacterized protein (88 aa).

This is an uncharacterized protein from Sputnik virophage.